The sequence spans 179 residues: Putative undecaprenyl-phosphate N-acetylgalactosaminyl 1-phosphate transferase (179 aa).

Residues 39–59 traverse the membrane as a helical segment; sequence IWFALIGLAIALPMIAVFSIL.

It belongs to the bacterial sugar transferase family.

Its subcellular location is the cell membrane. The enzyme catalyses di-trans,octa-cis-undecaprenyl phosphate + UDP-N-acetyl-alpha-D-galactosamine = N-acetyl-alpha-D-galactosaminyl-di-trans,octa-cis-undecaprenyl diphosphate + UMP. It functions in the pathway cell wall biogenesis; teichuronic acid biosynthesis. Its function is as follows. Might mediate the very first reaction in teichuronic synthesis, i.e. the formation of lipid-linked N-acetylglucosamine. In Bacillus subtilis (strain 168), this protein is Putative undecaprenyl-phosphate N-acetylgalactosaminyl 1-phosphate transferase (tuaA).